The sequence spans 364 residues: DNA polymerase IV (364 aa).

The UmuC domain maps to 14–198 (IIHIDMDAFF…LPIEKFHGVG (185 aa)). Mg(2+) is bound by residues Asp18 and Asp116. Glu117 is a catalytic residue.

It belongs to the DNA polymerase type-Y family. Monomer. Requires Mg(2+) as cofactor.

It localises to the cytoplasm. It catalyses the reaction DNA(n) + a 2'-deoxyribonucleoside 5'-triphosphate = DNA(n+1) + diphosphate. In terms of biological role, poorly processive, error-prone DNA polymerase involved in untargeted mutagenesis. Copies undamaged DNA at stalled replication forks, which arise in vivo from mismatched or misaligned primer ends. These misaligned primers can be extended by PolIV. Exhibits no 3'-5' exonuclease (proofreading) activity. May be involved in translesional synthesis, in conjunction with the beta clamp from PolIII. This Streptococcus pyogenes serotype M5 (strain Manfredo) protein is DNA polymerase IV.